Reading from the N-terminus, the 355-residue chain is GTPase Obg (355 aa).

The region spanning 1 to 159 (MKLVDEAEIL…RLLKLELKLL (159 aa)) is the Obg domain. In terms of domain architecture, OBG-type G spans 160 to 342 (ADVGLLGFPN…IMKDVMAFFD (183 aa)). GTP-binding positions include 166 to 173 (GFPNAGKS), 191 to 195 (FTTLY), 213 to 216 (DVPG), 292 to 295 (NKAD), and 323 to 325 (SAL). S173 and T193 together coordinate Mg(2+).

It belongs to the TRAFAC class OBG-HflX-like GTPase superfamily. OBG GTPase family. As to quaternary structure, monomer. Mg(2+) serves as cofactor.

The protein resides in the cytoplasm. An essential GTPase which binds GTP, GDP and possibly (p)ppGpp with moderate affinity, with high nucleotide exchange rates and a fairly low GTP hydrolysis rate. Plays a role in control of the cell cycle, stress response, ribosome biogenesis and in those bacteria that undergo differentiation, in morphogenesis control. The protein is GTPase Obg of Xanthomonas euvesicatoria pv. vesicatoria (strain 85-10) (Xanthomonas campestris pv. vesicatoria).